Reading from the N-terminus, the 476-residue chain is Argininosuccinate lyase (476 aa).

This sequence belongs to the lyase 1 family. Argininosuccinate lyase subfamily.

The protein localises to the cytoplasm. The enzyme catalyses 2-(N(omega)-L-arginino)succinate = fumarate + L-arginine. Its pathway is amino-acid biosynthesis; L-arginine biosynthesis; L-arginine from L-ornithine and carbamoyl phosphate: step 3/3. In Acaryochloris marina (strain MBIC 11017), this protein is Argininosuccinate lyase.